A 429-amino-acid chain; its full sequence is UDP-N-acetylglucosamine 1-carboxyvinyltransferase (429 aa).

22-23 (KN) contacts phosphoenolpyruvate. Arg-93 is a binding site for UDP-N-acetyl-alpha-D-glucosamine. Cys-117 acts as the Proton donor in catalysis. The residue at position 117 (Cys-117) is a 2-(S-cysteinyl)pyruvic acid O-phosphothioketal. Residues 122–126 (RPVDL), Asp-307, and Val-329 contribute to the UDP-N-acetyl-alpha-D-glucosamine site.

Belongs to the EPSP synthase family. MurA subfamily.

The protein resides in the cytoplasm. It carries out the reaction phosphoenolpyruvate + UDP-N-acetyl-alpha-D-glucosamine = UDP-N-acetyl-3-O-(1-carboxyvinyl)-alpha-D-glucosamine + phosphate. Its pathway is cell wall biogenesis; peptidoglycan biosynthesis. In terms of biological role, cell wall formation. Adds enolpyruvyl to UDP-N-acetylglucosamine. The protein is UDP-N-acetylglucosamine 1-carboxyvinyltransferase of Chloroherpeton thalassium (strain ATCC 35110 / GB-78).